The following is a 248-amino-acid chain: PF03932 family protein CutC (248 aa).

It belongs to the CutC family. Homodimer.

The protein localises to the cytoplasm. This chain is PF03932 family protein CutC, found in Escherichia coli O157:H7.